Here is a 213-residue protein sequence, read N- to C-terminus: Uridine kinase (213 aa).

Position 12 to 19 (12 to 19) interacts with ATP; that stretch reads GGSCSGKT.

This sequence belongs to the uridine kinase family.

It is found in the cytoplasm. The enzyme catalyses uridine + ATP = UMP + ADP + H(+). It carries out the reaction cytidine + ATP = CMP + ADP + H(+). The protein operates within pyrimidine metabolism; CTP biosynthesis via salvage pathway; CTP from cytidine: step 1/3. It functions in the pathway pyrimidine metabolism; UMP biosynthesis via salvage pathway; UMP from uridine: step 1/1. This Mycoplasma genitalium (strain ATCC 33530 / DSM 19775 / NCTC 10195 / G37) (Mycoplasmoides genitalium) protein is Uridine kinase (udk).